A 635-amino-acid chain; its full sequence is Probable monoacyl phosphatidylinositol tetramannoside-binding protein LpqW (635 aa).

The first 26 residues, 1 to 26 (MGVPSPVRRVCVTVGALVALACMVLA), serve as a signal peptide directing secretion. Disordered regions lie at residues 32–52 (PPPA…PRRP), 389–412 (NTSV…GPPE), and 511–551 (NAPT…LVKA). Low complexity-rich tracts occupy residues 390-411 (TSVS…TGPP) and 511-531 (NAPT…APDT).

It belongs to the bacterial solute-binding protein 5 family.

Its pathway is phospholipid metabolism; phosphatidylinositol metabolism. Functionally, may directly or indirectly regulate the accessibility of the key branch point intermediate, monoacyl phosphatidylinositol tetramannoside (AcPIM4), to the elongating alpha-1,6 mannosyltransferases which could regulate the lipoarabinomannans (LAMs) biosynthesis. This is Probable monoacyl phosphatidylinositol tetramannoside-binding protein LpqW (lpqW) from Mycobacterium tuberculosis (strain CDC 1551 / Oshkosh).